The sequence spans 137 residues: uncharacterized protein (137 aa).

Residues 1–10 (MISVDVPGHP) are compositionally biased toward low complexity. The disordered stretch occupies residues 1–23 (MISVDVPGHPGDAGGGGGGARKV). Gly residues predominate over residues 11–20 (GDAGGGGGGA).

This is an uncharacterized protein from Human adenovirus C serotype 2 (HAdV-2).